The following is a 175-amino-acid chain: Regenerating islet-derived protein 3-alpha (175 aa).

Positions 1–26 (MLPPMALPSVSWMLLSCLMLLSQVQG) are cleaved as a signal peptide. Residues 27-37 (EEPQRELPSAR) constitute a propeptide that is removed on maturation. Intrachain disulfides connect Cys-40–Cys-51, Cys-68–Cys-171, and Cys-146–Cys-163. One can recognise a C-type lectin domain in the interval 47-172 (YGSHCYALFL…CNVRLPYVCK (126 aa)). Zn(2+)-binding residues include His-50 and His-107. The sufficient to activate EXTL3 stretch occupies residues 103 to 118 (WIGLHDPTQGTEPNGE). The short motif at 114–116 (EPN) is the EPN element. Positions 121 and 145 each coordinate Zn(2+).

As to quaternary structure, forms a hexameric membrane-permeabilizing oligomeric pore on membrane phospholipids. The hexamer is formed by three dimers related by helical symmetry. Forms filaments, filamentation traps pore complexes and limits damage to host cells. Interacts with EXTL3. In terms of processing, proteolytic processing by trypsin removes an inhibitory N-terminal propeptide and is essential for peptidoglycan binding and antibacterial activity. Expressed by keratinocytes. Highly expressed in epidermal keratinocytes of psoriasis patients (at protein level). Constitutively expressed in intestine. Low expression is found in healthy pancreas. Overexpressed during the acute phase of pancreatitis and in some patients with chronic pancreatitis.

Its subcellular location is the secreted. With respect to regulation, lipopolysaccharide inhibits pore-forming activity, explaining why is bactericidal for Gram-positive but not Gram-negative bacteria. Its function is as follows. Bactericidal C-type lectin which acts exclusively against Gram-positive bacteria and mediates bacterial killing by binding to surface-exposed carbohydrate moieties of peptidoglycan. Binds membrane phospholipids and kills bacteria by forming a hexameric membrane-permeabilizing oligomeric pore. Acts as a hormone in response to different stimuli like anti-inflammatory signals, such as IL17A, or gut microbiome. Secreted by different cell types to activate its receptor EXTL3 and induce cell specific signaling pathways. Induced by IL17A in keratinocytes, regulates keratinocyte proliferation and differentiation after skin injury via activation of EXTL3-PI3K-AKT signaling pathway. In parallel, inhibits skin inflammation through the inhibition of inflammatory cytokines such as IL6 and TNF. In pancreas, is able to permealize beta-cells membrane and stimulate their proliferation. Functionally, has bacteriostatic activity. The sequence is that of Regenerating islet-derived protein 3-alpha from Homo sapiens (Human).